The primary structure comprises 419 residues: NFATC2-interacting protein (419 aa).

2 disordered regions span residues 1-131 (MAEP…GKVK) and 151-215 (DEEE…HTRA). The segment covering 11–27 (WSGGSGAGRGGRGGWGG) has biased composition (gly residues). Residues 35–51 (QRSPSRGTLDVVSVDLV) are compositionally biased toward low complexity. A phosphoserine mark is found at serine 54, serine 84, serine 88, serine 90, serine 92, and serine 127. Glycyl lysine isopeptide (Lys-Gly) (interchain with G-Cter in SUMO2) cross-links involve residues lysine 129 and lysine 131. A compositionally biased stretch (basic and acidic residues) spans 180–192 (RTKDKEEKKKTEF). Serine 198, serine 201, serine 204, serine 220, and serine 314 each carry phosphoserine. Residues 209–231 (SRTHTRALKKLSEVNKRLQDLRS) adopt a coiled-coil conformation. 2 positions are modified to phosphothreonine: threonine 316 and threonine 318. In terms of domain architecture, Ubiquitin-like spans 348 to 419 (LQLRVQGKEK…ESGDLIEVWG (72 aa)). Phosphoserine occurs at positions 369 and 390.

As to quaternary structure, interacts with NFATC2, TRAF1, TRAF2 and PRMT1. Interacts with UBE2I/UBC9. Post-translationally, methylation at the N-terminus by PRMT1 modulates interaction with the NFAT complex and results in augmented cytokine production.

Its subcellular location is the nucleus. It localises to the cytoplasm. Functionally, in T-helper 2 (Th2) cells, regulates the magnitude of NFAT-driven transcription of a specific subset of cytokine genes, including IL3, IL4, IL5 and IL13, but not IL2. Recruits PRMT1 to the IL4 promoter; this leads to enhancement of histone H4 'Arg-3'-methylation and facilitates subsequent histone acetylation at the IL4 locus, thus promotes robust cytokine expression. Down-regulates formation of poly-SUMO chains by UBE2I/UBC9. The chain is NFATC2-interacting protein (NFATC2IP) from Homo sapiens (Human).